A 155-amino-acid chain; its full sequence is uncharacterized protein (155 aa).

The segment at 56 to 79 (GEKRPTHRRPYRRTKPYPKRPSML) is disordered. Basic residues predominate over residues 60–73 (PTHRRPYRRTKPYP).

This is an uncharacterized protein from Sinorhizobium fredii (strain NBRC 101917 / NGR234).